We begin with the raw amino-acid sequence, 142 residues long: NCT transcriptional regulatory complex subunit B (142 aa).

The protein belongs to the NC2 beta/DR1 family. Forms the NCT transcriptional regulatory complex with nctA and mot1.

The protein localises to the nucleus. Its function is as follows. Part of the NCT transcriptional regulatory complex that acts as a key regulator of ergosterol biosynthesis and the azole exporter cdr1B. The NCT complex binds the promoters of genes linked to azole susceptibility, and especially represses the expression of cdr1B transporter. The polypeptide is NCT transcriptional regulatory complex subunit B (Aspergillus fumigatus (strain CBS 144.89 / FGSC A1163 / CEA10) (Neosartorya fumigata)).